The chain runs to 159 residues: Ribosomal RNA large subunit methyltransferase H (159 aa).

S-adenosyl-L-methionine contacts are provided by residues Leu76, Gly108, and 127-132 (FSKMTF).

The protein belongs to the RNA methyltransferase RlmH family. As to quaternary structure, homodimer.

It localises to the cytoplasm. It catalyses the reaction pseudouridine(1915) in 23S rRNA + S-adenosyl-L-methionine = N(3)-methylpseudouridine(1915) in 23S rRNA + S-adenosyl-L-homocysteine + H(+). In terms of biological role, specifically methylates the pseudouridine at position 1915 (m3Psi1915) in 23S rRNA. The protein is Ribosomal RNA large subunit methyltransferase H of Clostridium botulinum (strain Eklund 17B / Type B).